The chain runs to 627 residues: MSVISIVPLASNSCLYKSLMSSTHELKALCRPIATLGMCRRGKSVMASMSTSLTTAVSDDGVQRRIGHHHSNLWDDNFIQSLSSPYGASSYAESAKKLIGEVKEIFNSLSMAAGGLMSPVDDLLQHLSMVDNVERLGIDRHFQTEIKVSLDYVYSYWSEKGIGSGRDIVCTDLNTTALGFRILRLHGYTVFPDVFEHFKDQMGRIACSANHTERQISSILNLFRASLIAFPGEKVMEEAEIFSATYLKEALQTIPVSSLSQEMQYVLDYRWHSNLPRLETRTYIDILGETTINQMQDVNIQKLLELAKLEFNIFHSIQQNELKCISRWWKESGSPELTFIRHRHIEFYTLASGIDMEPKHSAFRLSFVKMCHLITVLDDIYDTFGTMDELRLFTSAVKRWDRSEIECLPEYMKGVYIILYETVNEMAREARKSQGRDTLNYARLALEEYIGAYLKEAEWISMGYLPTFEEYFKNGKVSSGHRIATLQPILTLDIPFPHHILQEIDFPSKFNELACSILRLRGDTRCYQADRDRGEKASCISCYMKDNPGSTEEDALNHINGMIEDTIKQLNWELLRPDNNVPISSKKHSFDISRAFHHLYRYRDGYTVSSNETKNLVVRTVLEPLPM.

The N-terminal 46 residues, 1–46 (MSVISIVPLASNSCLYKSLMSSTHELKALCRPIATLGMCRRGKSVM), are a transit peptide targeting the chloroplast. Positions 378, 382, and 530 each coordinate Mg(2+). Positions 378 to 382 (DDIYD) match the DDXXD motif motif.

This sequence belongs to the terpene synthase family. Tpsd subfamily. As to quaternary structure, monomer. Mg(2+) serves as cofactor.

The protein resides in the plastid. The protein localises to the chloroplast. The catalysed reaction is (2E)-geranyl diphosphate = (1R,5R)-sabinene + diphosphate. Its pathway is terpene metabolism; oleoresin biosynthesis. Its function is as follows. Terpene synthase (TPS) involved in defensive oleoresin formation in conifers in response to insect attack (e.g. white pine weevil P.strobi) or other injury. Produces (+)-sabinene from geranyl diphosphate, but has no activity with geranylgeranyl diphosphate or farnesyl diphosphate. This Picea sitchensis (Sitka spruce) protein is (+)-sabinene synthase, chloroplastic (TPS-sab).